A 548-amino-acid chain; its full sequence is ATP synthase subunit alpha (548 aa).

172–179 (GDRKTGKT) contacts ATP.

It belongs to the ATPase alpha/beta chains family. F-type ATPases have 2 components, CF(1) - the catalytic core - and CF(0) - the membrane proton channel. CF(1) has five subunits: alpha(3), beta(3), gamma(1), delta(1), epsilon(1). CF(0) has three main subunits: a(1), b(2) and c(9-12). The alpha and beta chains form an alternating ring which encloses part of the gamma chain. CF(1) is attached to CF(0) by a central stalk formed by the gamma and epsilon chains, while a peripheral stalk is formed by the delta and b chains.

It is found in the cell membrane. The enzyme catalyses ATP + H2O + 4 H(+)(in) = ADP + phosphate + 5 H(+)(out). Produces ATP from ADP in the presence of a proton gradient across the membrane. The alpha chain is a regulatory subunit. The chain is ATP synthase subunit alpha from Mycobacteroides abscessus (strain ATCC 19977 / DSM 44196 / CCUG 20993 / CIP 104536 / JCM 13569 / NCTC 13031 / TMC 1543 / L948) (Mycobacterium abscessus).